Here is a 247-residue protein sequence, read N- to C-terminus: Probable transcriptional regulatory protein Spro_2779 (247 aa).

Belongs to the TACO1 family.

It localises to the cytoplasm. The polypeptide is Probable transcriptional regulatory protein Spro_2779 (Serratia proteamaculans (strain 568)).